Consider the following 157-residue polypeptide: Phosphopantetheine adenylyltransferase (157 aa).

Threonine 8 is a substrate binding site. Residues 8–9 (TF) and histidine 16 contribute to the ATP site. Substrate contacts are provided by lysine 40, threonine 72, and arginine 86. ATP is bound by residues 87 to 89 (GLR), glutamate 97, and 122 to 128 (YSFLSSS).

Belongs to the bacterial CoaD family. Homohexamer. Mg(2+) is required as a cofactor.

The protein localises to the cytoplasm. The catalysed reaction is (R)-4'-phosphopantetheine + ATP + H(+) = 3'-dephospho-CoA + diphosphate. The protein operates within cofactor biosynthesis; coenzyme A biosynthesis; CoA from (R)-pantothenate: step 4/5. Its function is as follows. Reversibly transfers an adenylyl group from ATP to 4'-phosphopantetheine, yielding dephospho-CoA (dPCoA) and pyrophosphate. This is Phosphopantetheine adenylyltransferase from Prochlorococcus marinus (strain AS9601).